We begin with the raw amino-acid sequence, 503 residues long: Cytosol aminopeptidase (503 aa).

Positions 269 and 274 each coordinate Mn(2+). Residue K281 is part of the active site. The Mn(2+) site is built by D292, D351, and E353. R355 is a catalytic residue.

Belongs to the peptidase M17 family. Mn(2+) serves as cofactor.

It is found in the cytoplasm. The enzyme catalyses Release of an N-terminal amino acid, Xaa-|-Yaa-, in which Xaa is preferably Leu, but may be other amino acids including Pro although not Arg or Lys, and Yaa may be Pro. Amino acid amides and methyl esters are also readily hydrolyzed, but rates on arylamides are exceedingly low.. It catalyses the reaction Release of an N-terminal amino acid, preferentially leucine, but not glutamic or aspartic acids.. Presumably involved in the processing and regular turnover of intracellular proteins. Catalyzes the removal of unsubstituted N-terminal amino acids from various peptides. In Vibrio cholerae serotype O1 (strain ATCC 39541 / Classical Ogawa 395 / O395), this protein is Cytosol aminopeptidase.